The sequence spans 453 residues: Potassium/proton antiporter CemA (453 aa).

A run of 4 helical transmembrane segments spans residues 235–255, 328–348, 378–398, and 414–434; these read YMACLIFLPWVFSTICKIIFL, ICTILNLLTDWISITCLACLL, ILLLTDLCIGFHSPHGWEIII, and VSCFVSTFPVILDTVLKYWIF.

This sequence belongs to the CemA family.

The protein resides in the plastid. It localises to the chloroplast inner membrane. It catalyses the reaction K(+)(in) + H(+)(out) = K(+)(out) + H(+)(in). Its function is as follows. Contributes to K(+)/H(+) antiport activity by supporting proton efflux to control proton extrusion and homeostasis in chloroplasts in a light-dependent manner to modulate photosynthesis. Prevents excessive induction of non-photochemical quenching (NPQ) under continuous-light conditions. Indirectly promotes efficient inorganic carbon uptake into chloroplasts. The chain is Potassium/proton antiporter CemA from Zygnema circumcarinatum (Green alga).